The chain runs to 219 residues: Cytidylate kinase (219 aa).

21 to 29 is a binding site for ATP; sequence GPAASGKGT.

This sequence belongs to the cytidylate kinase family. Type 1 subfamily.

The protein resides in the cytoplasm. The catalysed reaction is CMP + ATP = CDP + ADP. It carries out the reaction dCMP + ATP = dCDP + ADP. This Rickettsia africae (strain ESF-5) protein is Cytidylate kinase.